The chain runs to 99 residues: Carboxysome shell vertex protein CcmL (99 aa).

The BMV domain maps to 1 to 83; it reads MKIARVCGTV…IDAAVVAIID (83 aa).

This sequence belongs to the CcmL/EutN family. CcmL subfamily. In terms of assembly, homopentamer. May interact with CcmK2, this occurs at very high CcmK2 concentrations. Interacts with full-length CcmM.

Its subcellular location is the carboxysome. Its function is as follows. Probably forms vertices in the carboxysome, a polyhedral inclusion where RuBisCO (ribulose bisphosphate carboxylase, rbcL-rbcS) is sequestered. Has been modeled to induce curvature upon insertion into an otherwise flat hexagonal molecular layer of CcmK subunits. This Thermosynechococcus vestitus (strain NIES-2133 / IAM M-273 / BP-1) protein is Carboxysome shell vertex protein CcmL.